Reading from the N-terminus, the 376-residue chain is 5-hydroxytryptamine receptor 1D (376 aa).

The interval 1–22 (MSPPNQSEEGLPQEASNRSLNA) is disordered. 3 N-linked (GlcNAc...) asparagine glycosylation sites follow: asparagine 5, asparagine 17, and asparagine 21. Transmembrane regions (helical) follow at residues 39–64 (VSLV…TTIL), 76–97 (LIGS…ISIA), and 110–134 (LCDI…VIAL). Cysteine 111 and cysteine 188 form a disulfide bridge. Residues aspartate 118 and cysteine 122 each coordinate serotonin. The short motif at 135 to 137 (DRY) is the DRY motif; important for ligand-induced conformation changes element. The next 4 membrane-spanning stretches (helical) occupy residues 155–176 (AGAM…PLFW), 195–218 (ISYT…ILYS), 300–325 (KTLG…VLPI), and 335–358 (ALFD…YTVF). Residue serine 320 participates in serotonin binding. Positions 351–355 (NPIIY) match the NPxxY motif; important for ligand-induced conformation changes and signaling motif.

The protein belongs to the G-protein coupled receptor 1 family. As to quaternary structure, homodimer. Heterodimer with HTR1B.

It localises to the cell membrane. Its function is as follows. G-protein coupled receptor for 5-hydroxytryptamine (serotonin). Also functions as a receptor for ergot alkaloid derivatives, various anxiolytic and antidepressant drugs and other psychoactive substances. Ligand binding causes a conformation change that triggers signaling via guanine nucleotide-binding proteins (G proteins) and modulates the activity of downstream effectors, such as adenylate cyclase. HTR1D is coupled to G(i)/G(o) G alpha proteins and mediates inhibitory neurotransmission by inhibiting adenylate cyclase activity. Regulates the release of 5-hydroxytryptamine in the brain, and thereby affects neural activity. May also play a role in regulating the release of other neurotransmitters. May play a role in vasoconstriction. This chain is 5-hydroxytryptamine receptor 1D (HTR1D), found in Cavia porcellus (Guinea pig).